The following is a 604-amino-acid chain: Prostaglandin G/H synthase 2 (604 aa).

A signal peptide spans 1 to 17 (MLFRAVLLCAALGLSQA). The EGF-like domain maps to 18-55 (ANPCCSNPCQNRGECMSTGFDQYKCDCTRTGFYGENCT). 4 disulfide bridges follow: cysteine 21–cysteine 32, cysteine 22–cysteine 145, cysteine 26–cysteine 42, and cysteine 44–cysteine 54. Asparagine 53 is a glycosylation site (N-linked (GlcNAc...) asparagine). Arginine 106 contacts substrate. Asparagine 130 is a glycosylation site (N-linked (GlcNAc...) asparagine). Histidine 193 (proton acceptor) is an active-site residue. Position 341 (tyrosine 341) interacts with substrate. Tyrosine 371 functions as the For cyclooxygenase activity in the catalytic mechanism. Residue histidine 374 coordinates heme b. N-linked (GlcNAc...) asparagine glycosylation is present at asparagine 396. Cysteine 526 carries the S-nitrosocysteine modification. Residues cysteine 555 and cysteine 561 are joined by a disulfide bond. Serine 565 carries the post-translational modification O-acetylserine; by SPHK1. N-linked (GlcNAc...) asparagine glycosylation occurs at asparagine 580.

Belongs to the prostaglandin G/H synthase family. Homodimer. Heme b serves as cofactor. Post-translationally, S-nitrosylation by NOS2 (iNOS) activates enzyme activity. S-nitrosylation may take place on different Cys residues in addition to Cys-526. In terms of processing, acetylated at Ser-565 by SPHK1. During neuroinflammation, acetylation by SPHK1 promotes neuronal secretion of specialized preresolving mediators (SPMs), especially 15-R-lipoxin A4, which results in an increase of phagocytic microglia. In terms of tissue distribution, following colon injury, expressed in the wound bed mesenchyme during the first phase of repair, probably by colonic mesenchymal stem cells (at protein level).

The protein resides in the microsome membrane. It is found in the endoplasmic reticulum membrane. It localises to the nucleus inner membrane. Its subcellular location is the nucleus outer membrane. It catalyses the reaction (5Z,8Z,11Z,14Z)-eicosatetraenoate + AH2 + 2 O2 = prostaglandin H2 + A + H2O. It carries out the reaction (5Z,8Z,11Z,14Z)-eicosatetraenoate + 2 O2 = prostaglandin G2. The enzyme catalyses prostaglandin G2 + AH2 = prostaglandin H2 + A + H2O. The catalysed reaction is (5Z,8Z,11Z,14Z,17Z)-eicosapentaenoate + 2 O2 = prostaglandin G3. It catalyses the reaction prostaglandin G3 + AH2 = prostaglandin H3 + A + H2O. It carries out the reaction (8Z,11Z,14Z)-eicosatrienoate + 2 O2 = prostaglandin G1. The enzyme catalyses prostaglandin G1 + AH2 = prostaglandin H1 + A + H2O. The catalysed reaction is 2-(5Z,8Z,11Z,14Z)-eicosatetraenoyl-sn-glycero-3-phosphoethanolamine + 2 O2 = 2-(prostaglandin G2)-sn-glycero-3-phosphoethanolamine. It catalyses the reaction 2-(prostaglandin G2)-sn-glycero-3-phosphoethanolamine + AH2 = 2-(prostaglandin H2)-sn-glycero-3-phosphoethanolamine + A + H2O. It carries out the reaction 2-(5Z,8Z,11Z,14Z)-eicosatetraenoyl-sn-glycero-3-phosphocholine + 2 O2 = 2-(prostaglandin G2)-sn-glycero-3-phosphocholine. The enzyme catalyses 2-(prostaglandin G2)-sn-glycero-3-phosphocholine + AH2 = 2-(prostaglandin H2)-sn-glycero-3-phosphocholine + A + H2O. The catalysed reaction is (15S)-hydroperoxy-(5Z,8Z,11Z,13E)-eicosatetraenoate + AH2 = (15S)-hydroxy-(5Z,8Z,11Z,13E)-eicosatetraenoate + A + H2O. It catalyses the reaction 2-(5Z,8Z,11Z,14Z)-eicosatetraenoyl-sn-glycero-3-phosphocholine + AH2 + O2 = 2-[(15S)-hydroxy-(5Z,8Z,11Z,13E)-eicosatetraenoyl]-sn-glycero-3-phosphocholine + A + H2O. It carries out the reaction 2-(5Z,8Z,11Z,14Z)-eicosatetraenoyl-sn-glycero-3-phosphocholine + AH2 + O2 = 2-[(15R)-hydroxy-(5Z,8Z,11Z,13E)-eicosatetraenoyl]-sn-glycero-3-phosphocholine + A + H2O. The enzyme catalyses 2-(5Z,8Z,11Z,14Z)-eicosatetraenoyl-sn-glycero-3-phosphocholine + AH2 + O2 = 2-[(11R)-hydroxy-(5Z,8Z,12E,14Z)-eicosatetraenoyl]-sn-glycero-3-phosphocholine + A + H2O. The catalysed reaction is (9Z,12Z)-octadecadienoate + AH2 + O2 = 9-hydroxy-(10E,12Z)-octadecadienoate + A + H2O. It catalyses the reaction (9Z,12Z)-octadecadienoate + AH2 + O2 = 13-hydroxy-(9Z,11E)-octadecadienoate + A + H2O. It carries out the reaction (5Z,8Z,11Z,14Z)-eicosatetraenoate + AH2 + O2 = (15R)-hydroxy-(5Z,8Z,11Z,13E)-eicosatetraenoate + A + H2O. The enzyme catalyses (5Z,8Z,11Z,14Z)-eicosatetraenoate + AH2 + O2 = (11R)-hydroxy-(5Z,8Z,12E,14Z)-eicosatetraenoate + A + H2O. The catalysed reaction is (5Z,8Z,11Z,14Z,17Z)-eicosapentaenoate + AH2 + O2 = (11R)-hydroxy-(5Z,8Z,12E,14Z,17Z)-eicosapentaenoate + A + H2O. It catalyses the reaction (5Z,8Z,11Z,14Z,17Z)-eicosapentaenoate + AH2 + O2 = (18S)-hydroxy-(5Z,8Z,11Z,14Z,16E)-eicosapentaenoate + A + H2O. It carries out the reaction (5Z,8Z,11Z,14Z,17Z)-eicosapentaenoate + AH2 + O2 = (18R)-hydroxy-(5Z,8Z,11Z,14Z,16E)-eicosapentaenoate + A + H2O. The enzyme catalyses (5Z,8Z,11Z,14Z,17Z)-eicosapentaenoate + AH2 + O2 = (15R)-hydroxy-(5Z,8Z,11Z,13E,17Z)-eicosapentaenoate + A + H2O. The catalysed reaction is (5Z,8Z,11Z,14Z,17Z)-eicosapentaenoate + AH2 + O2 = (15S)-hydroxy-(5Z,8Z,11Z,13E,17Z)-eicosapentaenoate + A + H2O. It catalyses the reaction (7Z,10Z,13Z,16Z,19Z)-docosapentaenoate + AH2 + O2 = 13R-hydroxy-(7Z,10Z,14E,16Z,19Z)-docosapentaenoate + A + H2O. It carries out the reaction (4Z,7Z,10Z,13Z,16Z,19Z)-docosahexaenoate + AH2 + O2 = 13-hydroxy-(4Z,7Z,10Z,14E,16Z,19Z)-docosahexaenoate + A + H2O. The enzyme catalyses (5S)-hydroxy-(6E,8Z,11Z,14Z)-eicosatetraenoate + AH2 + O2 = (5S,15R)-dihydroxy-(6E,8Z,11Z,13E)-eicosatetraenoate + A + H2O. The catalysed reaction is (4Z,7Z,10Z,13Z,16Z,19Z)-docosahexaenoate + AH2 + O2 = 17R-hydroxy-(4Z,7Z,10Z,13Z,15E,19Z)-docosahexaenoate + A + H2O. It catalyses the reaction (5S)-hydroxy-(6E,8Z,11Z,14Z)-eicosatetraenoate + AH2 + O2 = (5S,15S)-dihydroxy-(6E,8Z,11Z,13E)-eicosatetraenoate + A + H2O. It carries out the reaction (5S)-hydroxy-(6E,8Z,11Z,14Z)-eicosatetraenoate + AH2 + O2 = (5S,11R)-dihydroxy-(6E,8Z,12E,14Z)-eicosatetraenoate + A + H2O. The enzyme catalyses 2-(5Z,8Z,11Z,14Z-eicosatetraenoyl)-glycerol + 2 O2 = 2-glyceryl-prostaglandin G2. The catalysed reaction is 2-glyceryl-prostaglandin G2 + AH2 = 2-glyceryl-prostaglandin H2 + A + H2O. It catalyses the reaction (5Z,8Z,11Z,14Z)-eicosatetraenoate + O2 = (15R)-hydroperoxy-(5Z,8Z,11Z,13E)-eicosatetraenoate. It carries out the reaction (5Z,8Z,11Z,14Z)-eicosatetraenoate + O2 = 11R-hydroperoxy-(5Z,8Z,12E,14Z)-eicosatetraenoate. The enzyme catalyses (9Z,12Z)-octadecadienoate + AH2 + O2 = (9R)-hydroxy-(10E,12Z)-octadecadienoate + A + H2O. The catalysed reaction is (9Z,12Z)-octadecadienoate + AH2 + O2 = (9S)-hydroxy-(10E,12Z)-octadecadienoate + A + H2O. It catalyses the reaction (9Z,12Z)-octadecadienoate + AH2 + O2 = (13S)-hydroxy-(9Z,11E)-octadecadienoate + A + H2O. It carries out the reaction (9Z,12Z)-octadecadienoate + AH2 + O2 = (13R)-hydroxy-(9Z,11E)-octadecadienoate + A + H2O. It functions in the pathway lipid metabolism; prostaglandin biosynthesis. Its activity is regulated as follows. Inhibited by the nonsteroidal anti-inflammatory drugs aspirin, naproxen, diclofenac, meclofenamic acid, indomethacin and their analogs. In terms of biological role, dual cyclooxygenase and peroxidase in the biosynthesis pathway of prostanoids, a class of C20 oxylipins mainly derived from arachidonate, with a particular role in the inflammatory response. The cyclooxygenase activity oxygenates arachidonate (AA, C20:4(n-6)) to the hydroperoxy endoperoxide prostaglandin G2 (PGG2), and the peroxidase activity reduces PGG2 to the hydroxy endoperoxide PGH2, the precursor of all 2-series prostaglandins and thromboxanes. This complex transformation is initiated by abstraction of hydrogen at carbon 13 (with S-stereochemistry), followed by insertion of molecular O2 to form the endoperoxide bridge between carbon 9 and 11 that defines prostaglandins. The insertion of a second molecule of O2 (bis-oxygenase activity) yields a hydroperoxy group in PGG2 that is then reduced to PGH2 by two electrons. Similarly catalyzes successive cyclooxygenation and peroxidation of dihomo-gamma-linoleate (DGLA, C20:3(n-6)) and eicosapentaenoate (EPA, C20:5(n-3)) to corresponding PGH1 and PGH3, the precursors of 1- and 3-series prostaglandins. In an alternative pathway of prostanoid biosynthesis, converts 2-arachidonoyl lysophopholipids to prostanoid lysophopholipids, which are then hydrolyzed by intracellular phospholipases to release free prostanoids. Metabolizes 2-arachidonoyl glycerol yielding the glyceryl ester of PGH2, a process that can contribute to pain response. Generates lipid mediators from n-3 and n-6 polyunsaturated fatty acids (PUFAs) via a lipoxygenase-type mechanism. Oxygenates PUFAs to hydroperoxy compounds and then reduces them to corresponding alcohols. Plays a role in the generation of resolution phase interaction products (resolvins) during both sterile and infectious inflammation. Metabolizes docosahexaenoate (DHA, C22:6(n-3)) to 17R-HDHA, a precursor of the D-series resolvins (RvDs). As a component of the biosynthetic pathway of E-series resolvins (RvEs), converts eicosapentaenoate (EPA, C20:5(n-3)) primarily to 18S-HEPE that is further metabolized by ALOX5 and LTA4H to generate 18S-RvE1 and 18S-RvE2. In vascular endothelial cells, converts docosapentaenoate (DPA, C22:5(n-3)) to 13R-HDPA, a precursor for 13-series resolvins (RvTs) shown to activate macrophage phagocytosis during bacterial infection. In activated leukocytes, contributes to oxygenation of hydroxyeicosatetraenoates (HETE) to diHETES (5,15-diHETE and 5,11-diHETE). Can also use linoleate (LA, (9Z,12Z)-octadecadienoate, C18:2(n-6)) as substrate and produce hydroxyoctadecadienoates (HODEs) in a regio- and stereospecific manner, being (9R)-HODE ((9R)-hydroxy-(10E,12Z)-octadecadienoate) and (13S)-HODE ((13S)-hydroxy-(9Z,11E)-octadecadienoate) its major products. During neuroinflammation, plays a role in neuronal secretion of specialized preresolving mediators (SPMs) 15R-lipoxin A4 that regulates phagocytic microglia. The sequence is that of Prostaglandin G/H synthase 2 from Mus musculus (Mouse).